The primary structure comprises 429 residues: Histidine--tRNA ligase (429 aa).

Belongs to the class-II aminoacyl-tRNA synthetase family. In terms of assembly, homodimer.

The protein localises to the cytoplasm. It catalyses the reaction tRNA(His) + L-histidine + ATP = L-histidyl-tRNA(His) + AMP + diphosphate + H(+). This Corynebacterium efficiens (strain DSM 44549 / YS-314 / AJ 12310 / JCM 11189 / NBRC 100395) protein is Histidine--tRNA ligase.